The sequence spans 65 residues: UPF0434 protein VFMJ11_A0475 (65 aa).

This sequence belongs to the UPF0434 family.

This Aliivibrio fischeri (strain MJ11) (Vibrio fischeri) protein is UPF0434 protein VFMJ11_A0475.